Reading from the N-terminus, the 277-residue chain is Uridine-cytidine kinase 1 (277 aa).

Positions 1-30 (MASAGGGGSESAAPEADRPQPRPFLIGVSG) are disordered. ATP is bound at residue 30–38 (GGTASGKST). Residues Asp-87, Tyr-115, His-120, Arg-169, Arg-178, and Gln-186 each contribute to the substrate site. An ATP-binding site is contributed by Asp-215. Residues 238–250 (RHRGGPNGRNHKR) are compositionally biased toward basic residues. The tract at residues 238 to 277 (RHRGGPNGRNHKRTFPEPGDHPGVLATGKRSHLESSSRPH) is disordered. Thr-251 is modified (phosphothreonine). A compositionally biased stretch (basic and acidic residues) spans 268–277 (SHLESSSRPH).

This sequence belongs to the uridine kinase family.

The enzyme catalyses uridine + ATP = UMP + ADP + H(+). The catalysed reaction is cytidine + ATP = CMP + ADP + H(+). It participates in pyrimidine metabolism; CTP biosynthesis via salvage pathway; CTP from cytidine: step 1/3. It functions in the pathway pyrimidine metabolism; UMP biosynthesis via salvage pathway; UMP from uridine: step 1/1. Functionally, phosphorylates uridine and cytidine to uridine monophosphate and cytidine monophosphate. Does not phosphorylate deoxyribonucleosides or purine ribonucleosides. Can use ATP or GTP as a phosphate donor. This is Uridine-cytidine kinase 1 (Uck1) from Mus musculus (Mouse).